The chain runs to 211 residues: uncharacterized protein (211 aa).

This sequence belongs to the A.longa ORF167/ORF288 family.

The protein localises to the plastid. This is an uncharacterized protein from Euglena longa (Euglenophycean alga).